A 62-amino-acid polypeptide reads, in one-letter code: Double zinc ribbon protein TK0111 (62 aa).

Zn(2+)-binding residues include Cys13, Cys16, Cys31, Cys34, Cys42, Cys45, Cys54, and Cys57.

As to quaternary structure, crystallized in association with 70S ribosomes. It depends on Zn(2+) as a cofactor.

In Thermococcus kodakarensis (strain ATCC BAA-918 / JCM 12380 / KOD1) (Pyrococcus kodakaraensis (strain KOD1)), this protein is Double zinc ribbon protein TK0111.